Reading from the N-terminus, the 493-residue chain is Lysine--tRNA ligase (493 aa).

Positions 402 and 409 each coordinate Mg(2+).

It belongs to the class-II aminoacyl-tRNA synthetase family. In terms of assembly, homodimer. Mg(2+) is required as a cofactor.

The protein resides in the cytoplasm. It catalyses the reaction tRNA(Lys) + L-lysine + ATP = L-lysyl-tRNA(Lys) + AMP + diphosphate. This chain is Lysine--tRNA ligase, found in Ureaplasma parvum serovar 3 (strain ATCC 27815 / 27 / NCTC 11736).